A 427-amino-acid chain; its full sequence is UDP-N-acetylglucosamine 1-carboxyvinyltransferase 1 (427 aa).

A phosphoenolpyruvate-binding site is contributed by 23 to 24 (KN). Arg96 contributes to the UDP-N-acetyl-alpha-D-glucosamine binding site. Cys120 functions as the Proton donor in the catalytic mechanism. Cys120 bears the 2-(S-cysteinyl)pyruvic acid O-phosphothioketal mark. Residues 125-129 (RPIDL), Asp309, and Val331 contribute to the UDP-N-acetyl-alpha-D-glucosamine site.

The protein belongs to the EPSP synthase family. MurA subfamily.

The protein localises to the cytoplasm. It catalyses the reaction phosphoenolpyruvate + UDP-N-acetyl-alpha-D-glucosamine = UDP-N-acetyl-3-O-(1-carboxyvinyl)-alpha-D-glucosamine + phosphate. The protein operates within cell wall biogenesis; peptidoglycan biosynthesis. Functionally, cell wall formation. Adds enolpyruvyl to UDP-N-acetylglucosamine. This is UDP-N-acetylglucosamine 1-carboxyvinyltransferase 1 from Streptococcus pneumoniae serotype 4 (strain ATCC BAA-334 / TIGR4).